We begin with the raw amino-acid sequence, 185 residues long: Ribosome-recycling factor (185 aa).

This sequence belongs to the RRF family.

Its subcellular location is the cytoplasm. In terms of biological role, responsible for the release of ribosomes from messenger RNA at the termination of protein biosynthesis. May increase the efficiency of translation by recycling ribosomes from one round of translation to another. The polypeptide is Ribosome-recycling factor (Enterococcus faecalis (strain ATCC 700802 / V583)).